A 126-amino-acid polypeptide reads, in one-letter code: Large ribosomal subunit protein bL12 (126 aa).

The disordered stretch occupies residues 97–126 (PQPVKSGVSKEEAEEAKKQLAESGAEVEVK). Basic and acidic residues predominate over residues 104-116 (VSKEEAEEAKKQL).

This sequence belongs to the bacterial ribosomal protein bL12 family. As to quaternary structure, homodimer. Part of the ribosomal stalk of the 50S ribosomal subunit. Forms a multimeric L10(L12)X complex, where L10 forms an elongated spine to which 2 to 4 L12 dimers bind in a sequential fashion. Binds GTP-bound translation factors.

Its function is as follows. Forms part of the ribosomal stalk which helps the ribosome interact with GTP-bound translation factors. Is thus essential for accurate translation. This chain is Large ribosomal subunit protein bL12, found in Geotalea uraniireducens (strain Rf4) (Geobacter uraniireducens).